Here is a 519-residue protein sequence, read N- to C-terminus: Cytosol aminopeptidase (519 aa).

Ser42 is subject to Phosphoserine. Lys45 is modified (N6-succinyllysine). A Phosphoserine modification is found at Ser54. Lys61 and Lys103 each carry N6-succinyllysine. 2 positions are modified to phosphoserine: Ser180 and Ser194. Positions 202 and 203 each coordinate Zn(2+). Lys221 is modified (N6-acetyllysine; alternate). Lys221 carries the N6-succinyllysine; alternate modification. At Ser238 the chain carries Phosphoserine. 2 residues coordinate Zn(2+): Lys282 and Asp287. The substrate site is built by Lys282, Asp287, Ser292, and Lys294. Residue Asp287 participates in Mg(2+) binding. Lys294 is a catalytic residue. Arg303, Asp305, Asp364, and Glu366 together coordinate Zn(2+). Substrate is bound by residues Asp305 and Asp364. The Mg(2+) site is built by Asp364 and Glu366. Residue Arg368 is part of the active site. An N6-acetyllysine; alternate modification is found at Lys455. N6-succinyllysine; alternate is present on Lys455. Lys476 carries the post-translational modification N6-succinyllysine. N6-acetyllysine; alternate is present on Lys489. N6-succinyllysine; alternate is present on Lys489.

This sequence belongs to the peptidase M17 family. Homohexamer. Zn(2+) is required as a cofactor. Mn(2+) serves as cofactor.

It localises to the cytoplasm. The enzyme catalyses Release of an N-terminal amino acid, Xaa-|-Yaa-, in which Xaa is preferably Leu, but may be other amino acids including Pro although not Arg or Lys, and Yaa may be Pro. Amino acid amides and methyl esters are also readily hydrolyzed, but rates on arylamides are exceedingly low.. It carries out the reaction an S-substituted L-cysteinylglycine + H2O = an S-substituted L-cysteine + glycine. The catalysed reaction is L-cysteinylglycine + H2O = L-cysteine + glycine. It catalyses the reaction S-benzyl-L-cysteinylglycine + H2O = S-benzyl-L-cysteine + glycine. The enzyme catalyses Release of N-terminal proline from a peptide.. Its activity is regulated as follows. Bimane-S-cysteinylglycine-hydrolyzing activity is inhibited by o-phenanthroline or bestatin, and is activated by the addition of zinc chloride. Its function is as follows. Cytosolic metallopeptidase that catalyzes the removal of unsubstituted N-terminal hydrophobic amino acids from various peptides. The presence of Zn(2+) ions is essential for the peptidase activity, and the association with other cofactors can modulate the substrate spectificity of the enzyme. For instance, in the presence of Mn(2+), it displays a specific Cys-Gly hydrolyzing activity of Cys-Gly-S-conjugates. Involved in the metabolism of glutathione and in the degradation of glutathione S-conjugates, which may play a role in the control of the cell redox status. In Rattus norvegicus (Rat), this protein is Cytosol aminopeptidase.